A 493-amino-acid polypeptide reads, in one-letter code: Glutamyl-tRNA(Gln) amidotransferase subunit A (493 aa).

Residues lysine 78 and serine 158 each act as charge relay system in the active site. The active-site Acyl-ester intermediate is serine 182.

It belongs to the amidase family. GatA subfamily. Heterotrimer of A, B and C subunits.

It carries out the reaction L-glutamyl-tRNA(Gln) + L-glutamine + ATP + H2O = L-glutaminyl-tRNA(Gln) + L-glutamate + ADP + phosphate + H(+). Functionally, allows the formation of correctly charged Gln-tRNA(Gln) through the transamidation of misacylated Glu-tRNA(Gln) in organisms which lack glutaminyl-tRNA synthetase. The reaction takes place in the presence of glutamine and ATP through an activated gamma-phospho-Glu-tRNA(Gln). The sequence is that of Glutamyl-tRNA(Gln) amidotransferase subunit A from Rickettsia canadensis (strain McKiel).